Here is a 176-residue protein sequence, read N- to C-terminus: Nucleoside triphosphate/diphosphate phosphatase (176 aa).

The active-site Proton donor is the Arg23. Asn87, Asp103, Asp105, Asp107, Asp120, and Glu123 together coordinate Mg(2+).

It belongs to the Ntdp family. Mg(2+) serves as cofactor.

The enzyme catalyses a ribonucleoside 5'-triphosphate + H2O = a ribonucleoside 5'-diphosphate + phosphate + H(+). The catalysed reaction is a ribonucleoside 5'-diphosphate + H2O = a ribonucleoside 5'-phosphate + phosphate + H(+). Has nucleoside phosphatase activity towards nucleoside triphosphates and nucleoside diphosphates. The protein is Nucleoside triphosphate/diphosphate phosphatase of Lactococcus lactis subsp. cremoris (strain MG1363).